The following is a 223-amino-acid chain: uncharacterized protein (223 aa).

The segment covering methionine 1–lysine 11 has biased composition (basic residues). The segment at methionine 1–serine 37 is disordered. The span at glutamate 12–serine 37 shows a compositional bias: basic and acidic residues. Serine 43 is modified (phosphoserine). Disordered regions lie at residues leucine 49–valine 73 and threonine 196–histidine 223. Residues asparagine 51–glutamine 61 show a composition bias toward polar residues. Low complexity predominate over residues threonine 62 to valine 73. A compositionally biased stretch (basic residues) spans histidine 202–histidine 223.

This is an uncharacterized protein from Homo sapiens (Human).